Reading from the N-terminus, the 501-residue chain is Carotenoid cleavage oxygenase (501 aa).

Positions 162, 211, 314, and 494 each coordinate Fe cation.

It belongs to the carotenoid oxygenase family. Fe(2+) is required as a cofactor.

Functionally, catalyzes the oxidative cleavage of several carotenoids and apocarotenoids in vitro. In Mycobacterium tuberculosis (strain CDC 1551 / Oshkosh), this protein is Carotenoid cleavage oxygenase.